We begin with the raw amino-acid sequence, 570 residues long: Serine/threonine-protein kinase STY17 (570 aa).

The interval 112–145 (LNGNSGDVDPSDPAVNEDAQSSYNSRSLAPPTFG) is disordered. A compositionally biased stretch (polar residues) spans 129-145 (DAQSSYNSRSLAPPTFG). Residues 180 to 260 (EITFSTIDRP…PCSKQKSITF (81 aa)) form the ACT domain. A Protein kinase domain is found at 292–545 (LKIEKKVACG…EIIEMLNQLI (254 aa)). Residues 298–306 (VACGSYGEL) and Lys-319 contribute to the ATP site. Asp-413 acts as the Proton acceptor in catalysis. Ser-441 bears the Phosphoserine mark. Residue Thr-445 is modified to Phosphothreonine.

Belongs to the protein kinase superfamily. Ser/Thr protein kinase family. In terms of processing, autophosphorylated on serine and threonine residues. Autophosphorylated at Thr-445.

It is found in the cytoplasm. Its subcellular location is the cytosol. The enzyme catalyses L-seryl-[protein] + ATP = O-phospho-L-seryl-[protein] + ADP + H(+). The catalysed reaction is L-threonyl-[protein] + ATP = O-phospho-L-threonyl-[protein] + ADP + H(+). Its activity is regulated as follows. Activated by autophosphorylation at Thr-445. Serine/threonine protein kinase that specifically phosphorylates chloroplast precursor proteins in the cytosol within the cleavable presequences (transit peptides). May be part of a cytosolic regulatory network involved in chloroplast protein import. Does not phosphorylate mitochondrion precursor proteins. Specific for ATP and does not utilize other NTPs. Plays a role in chloroplast biogenesis and differentiation in cotyledons, possibly through phosphorylation of chloroplast preproteins. This chain is Serine/threonine-protein kinase STY17, found in Arabidopsis thaliana (Mouse-ear cress).